Here is a 144-residue protein sequence, read N- to C-terminus: Translation initiation factor 5A (144 aa).

Position 38 is a hypusine (Lys-38).

The protein belongs to the eIF-5A family.

It localises to the cytoplasm. Functionally, functions by promoting the formation of the first peptide bond. In Nanoarchaeum equitans (strain Kin4-M), this protein is Translation initiation factor 5A.